Here is a 346-residue protein sequence, read N- to C-terminus: Biotin synthase (346 aa).

In terms of domain architecture, Radical SAM core spans 38 to 256 (RQVQVSTLLS…IAVARIMMPT (219 aa)). 3 residues coordinate [4Fe-4S] cluster: Cys-53, Cys-57, and Cys-60. [2Fe-2S] cluster is bound by residues Cys-97, Cys-128, Cys-188, and Arg-260.

The protein belongs to the radical SAM superfamily. Biotin synthase family. In terms of assembly, homodimer. [4Fe-4S] cluster serves as cofactor. The cofactor is [2Fe-2S] cluster.

The catalysed reaction is (4R,5S)-dethiobiotin + (sulfur carrier)-SH + 2 reduced [2Fe-2S]-[ferredoxin] + 2 S-adenosyl-L-methionine = (sulfur carrier)-H + biotin + 2 5'-deoxyadenosine + 2 L-methionine + 2 oxidized [2Fe-2S]-[ferredoxin]. The protein operates within cofactor biosynthesis; biotin biosynthesis; biotin from 7,8-diaminononanoate: step 2/2. Catalyzes the conversion of dethiobiotin (DTB) to biotin by the insertion of a sulfur atom into dethiobiotin via a radical-based mechanism. The chain is Biotin synthase from Escherichia coli O6:H1 (strain CFT073 / ATCC 700928 / UPEC).